The chain runs to 310 residues: Keratin, type II cytoskeletal 8 (310 aa).

The disordered stretch occupies residues 1 to 38 (QRTLKVSSSGPRSFSSRSFSSGPSSRISSSSYSRVGSN). Lysine 5 is covalently cross-linked (Glycyl lysine isopeptide (Lys-Gly) (interchain with G-Cter in SUMO2)). 4 positions are modified to phosphoserine: serine 7, serine 9, serine 15, and serine 16. The span at 7-38 (SSSGPRSFSSRSFSSGPSSRISSSSYSRVGSN) shows a compositional bias: low complexity. Arginine 17 is subject to Omega-N-methylarginine. Phosphoserine is present on residues serine 18, serine 21, and serine 25. Arginine 26 bears the Omega-N-methylarginine mark. Phosphoserine is present on residues serine 28, serine 31, and serine 33. The residue at position 34 (arginine 34) is an Omega-N-methylarginine. Serine 37 is subject to Phosphoserine. Asymmetric dimethylarginine; alternate is present on arginine 42. Arginine 42 carries the omega-N-methylarginine; alternate modification. The interval 92-127 (EKEQIKTLNNKFASFIDKVRFLEQQNKILETKWSFL) is coil 1A. Residues 92–310 (EKEQIKTLNN…LRHTKTEISE (219 aa)) form the IF rod domain. Lysine 102 carries the N6-malonyllysine modification. Glycyl lysine isopeptide (Lys-Gly) (interchain with G-Cter in SUMO2) cross-links involve residues lysine 123 and lysine 131. A linker 1 region spans residues 128–144 (QQQKTSQSNLDGLFEKY). Residues 145 to 236 (ITNLRRQLDS…HLYEEEIKEM (92 aa)) are coil 1B. A Glycyl lysine isopeptide (Lys-Gly) (interchain with G-Cter in SUMO1); alternate cross-link involves residue lysine 198. Residue lysine 198 forms a Glycyl lysine isopeptide (Lys-Gly) (interchain with G-Cter in SUMO2); alternate linkage. At lysine 208 the chain carries N6-acetyllysine. The residue at position 229 (tyrosine 229) is a Phosphotyrosine. The interval 237 to 260 (QSQISDTSVVVSMDNSRSLDLDGI) is linker 12. Serine 254 and serine 275 each carry phosphoserine. Residues 261 to 310 (IADVRAQYEEIANRSRAEAETMYQIKYEELQLLAGKHGDDLRHTKTEISE) are coil 2. Lysine 286 is covalently cross-linked (Glycyl lysine isopeptide (Lys-Gly) (interchain with G-Cter in SUMO2)). Lysine 296 is covalently cross-linked (Glycyl lysine isopeptide (Lys-Gly) (interchain with G-Cter in SUMO2); alternate). At lysine 296 the chain carries N6-acetyllysine; alternate. Lysine 305 participates in a covalent cross-link: Glycyl lysine isopeptide (Lys-Gly) (interchain with G-Cter in SUMO2).

Belongs to the intermediate filament family. In terms of assembly, heterotetramer of two type I and two type II keratins. Forms a heterodimer with KRT18. Associates with KRT20. Interacts with PNN. When associated with KRT19, interacts with DMD. Interacts with APEX1. Interacts with GPER1. Interacts with EPPK1. Interacts with PKP1 and PKP2. In terms of processing, O-glycosylated. O-GlcNAcylation at multiple sites increases solubility, and decreases stability by inducing proteasomal degradation. Post-translationally, O-glycosylated (O-GlcNAcylated), in a cell cycle-dependent manner.

It is found in the cytoplasm. The protein localises to the nucleus. Its subcellular location is the nucleoplasm. It localises to the nucleus matrix. Its function is as follows. Together with KRT19, helps to link the contractile apparatus to dystrophin at the costameres of striated muscle. This chain is Keratin, type II cytoskeletal 8, found in Potorous tridactylus (Potoroo).